The chain runs to 269 residues: 3-methyl-2-oxobutanoate hydroxymethyltransferase (269 aa).

Mg(2+)-binding residues include Asp-48 and Asp-87. 3-methyl-2-oxobutanoate-binding positions include 48–49 (DS), Asp-87, and Lys-117. Glu-119 provides a ligand contact to Mg(2+). The Proton acceptor role is filled by Glu-186.

Belongs to the PanB family. Homodecamer; pentamer of dimers. Requires Mg(2+) as cofactor.

It is found in the cytoplasm. The enzyme catalyses 3-methyl-2-oxobutanoate + (6R)-5,10-methylene-5,6,7,8-tetrahydrofolate + H2O = 2-dehydropantoate + (6S)-5,6,7,8-tetrahydrofolate. It functions in the pathway cofactor biosynthesis; (R)-pantothenate biosynthesis; (R)-pantoate from 3-methyl-2-oxobutanoate: step 1/2. In terms of biological role, catalyzes the reversible reaction in which hydroxymethyl group from 5,10-methylenetetrahydrofolate is transferred onto alpha-ketoisovalerate to form ketopantoate. The chain is 3-methyl-2-oxobutanoate hydroxymethyltransferase from Moorella thermoacetica (strain ATCC 39073 / JCM 9320).